A 205-amino-acid chain; its full sequence is MTSAVGNTGMAAPQRVAALNRPNMVSVGTIVFLSQELMFFAGLFAMYFVSRANGLANGSWAEQTDYLNVPYALAITVILVSSSVTCQFGVFAAERGDVYGLRKWFLITIILGSIFVIGQAYEYFTLVGHGLSIQSSVYGSAFYITTGFHAAHVIAGVIAFVVVLMRIQKAKFTPAQATAAMVVSYYWHFVDVVWIGLFITIYFIQ.

5 consecutive transmembrane segments (helical) span residues 29-49, 73-93, 104-124, 144-164, and 184-204; these read TIVF…MYFV, LAIT…VFAA, WFLI…YEYF, ITTG…VVVL, and SYYW…IYFI.

It belongs to the cytochrome c oxidase subunit 3 family. Associates with subunits I, II and IV to form cytochrome c oxidase.

The protein localises to the cell membrane. The catalysed reaction is 4 Fe(II)-[cytochrome c] + O2 + 8 H(+)(in) = 4 Fe(III)-[cytochrome c] + 2 H2O + 4 H(+)(out). This is Cytochrome c oxidase subunit 3 (ctaE) from Corynebacterium efficiens (strain DSM 44549 / YS-314 / AJ 12310 / JCM 11189 / NBRC 100395).